We begin with the raw amino-acid sequence, 439 residues long: Apolipoprotein N-acyltransferase (439 aa).

6 consecutive transmembrane segments (helical) span residues 13–33 (LLAG…FLVF), 47–67 (LFSF…IPLI), 75–95 (FIAY…QFGL), 97–117 (YLLW…YTLV), 149–169 (NAGT…FPLF), and 175–195 (IFSL…ETSY). The region spanning 207 to 439 (IQPFVPQDVK…GSRGILLFSF (233 aa)) is the CN hydrolase domain. Glu-248 serves as the catalytic Proton acceptor. Lys-305 is an active-site residue. Cys-355 functions as the Nucleophile in the catalytic mechanism.

It belongs to the CN hydrolase family. Apolipoprotein N-acyltransferase subfamily.

The protein resides in the cell inner membrane. The catalysed reaction is N-terminal S-1,2-diacyl-sn-glyceryl-L-cysteinyl-[lipoprotein] + a glycerophospholipid = N-acyl-S-1,2-diacyl-sn-glyceryl-L-cysteinyl-[lipoprotein] + a 2-acyl-sn-glycero-3-phospholipid + H(+). The protein operates within protein modification; lipoprotein biosynthesis (N-acyl transfer). Its function is as follows. Catalyzes the phospholipid dependent N-acylation of the N-terminal cysteine of apolipoprotein, the last step in lipoprotein maturation. In Aquifex aeolicus (strain VF5), this protein is Apolipoprotein N-acyltransferase.